Consider the following 499-residue polypeptide: MVLFHSQASCSKRIEADAIILPFWKLKDKVKCAASIAKEYESLYQVALDNFSAKSREVELIYSCGQGKEKRIVLLGLGKNEELSSQEVLEAYAKATRLLRKAKCTTVNVVLPTISELRISIEDFLTNLTSGILSLNYNYPKYTKESSNDPLLTKVNVLGIVPKIADRIFRKEENIFEGVYLTRDLVNGNADEVTPQKLANIAKGMAKEFPSMDVKILNKDAILKEKMGLLAAVAKGSAVDPCFIVLTYQGKPKSKDHTVLIGKGVTFDSGGLDLKPGKAMLTMKEDMAGAATVLGILSGIAALELPVNVTAIVPATENAIDAAAYKMGDVYTGMSGLSVEIGSTDAEGRLILADAITYALKYCNPTRIIDFATLTGAMVVSLGEDVAGFFSNNDVLAQDLSEASAETSEALWRLPLVEKYNKALHSDIADMKNIGSNRAGAITAALFLKRFLEDQPVAWAHLDIAGTAYREKDEDLYPKYASGFGVRCLIYYIEKFLSK.

Positions 263 and 268 each coordinate Mn(2+). Residue Lys275 is part of the active site. The Mn(2+) site is built by Asp286, Asp345, and Glu347. Residue Arg349 is part of the active site.

This sequence belongs to the peptidase M17 family. It depends on Mn(2+) as a cofactor.

It is found in the cytoplasm. It catalyses the reaction Release of an N-terminal amino acid, Xaa-|-Yaa-, in which Xaa is preferably Leu, but may be other amino acids including Pro although not Arg or Lys, and Yaa may be Pro. Amino acid amides and methyl esters are also readily hydrolyzed, but rates on arylamides are exceedingly low.. It carries out the reaction Release of an N-terminal amino acid, preferentially leucine, but not glutamic or aspartic acids.. Its function is as follows. Presumably involved in the processing and regular turnover of intracellular proteins. Catalyzes the removal of unsubstituted N-terminal amino acids from various peptides. The polypeptide is Probable cytosol aminopeptidase (Chlamydia caviae (strain ATCC VR-813 / DSM 19441 / 03DC25 / GPIC) (Chlamydophila caviae)).